The chain runs to 268 residues: MVSLTTCCLKNIVNQHACVENTVLLYHLGLRWNCKTLYQCTQCNGVNYTNSHSDQCKNKDLFLMKVIVKKNLAVTRTLLSWGASPEYARLFCRNTEEEQALNVQHVADVSSSKILERLTMSYKENDEQLLITFYLLNLSTKFSTNLREQVRFNIVSYIICDLAIHQTFKTFYAKNYSLSTLYCIFLAIYYKLYTALRKMVKIYPGLKRFAYLIGFMFDDETVMETYNSTDDEISECKNRIIAIKGYYGNIHCRSDIDHMYAFSQNDYW.

The Cytoplasmic portion of the chain corresponds to 1 to 175; sequence MVSLTTCCLK…QTFKTFYAKN (175 aa). The chain crosses the membrane as a helical span at residues 176 to 193; the sequence is YSLSTLYCIFLAIYYKLY. Residues 194-268 are Extracellular-facing; sequence TALRKMVKIY…MYAFSQNDYW (75 aa). A glycan (N-linked (GlcNAc...) asparagine; by host) is linked at Asn-227.

This sequence belongs to the asfivirus MGF 300 family.

It is found in the host membrane. In terms of biological role, plays a role in virus cell tropism, and may be required for efficient virus replication in macrophages. The polypeptide is Protein MGF 300-1L (African swine fever virus (strain Badajoz 1971 Vero-adapted) (Ba71V)).